Consider the following 235-residue polypeptide: Large ribosomal subunit protein uL1 (235 aa).

Belongs to the universal ribosomal protein uL1 family. As to quaternary structure, part of the 50S ribosomal subunit.

Its function is as follows. Binds directly to 23S rRNA. The L1 stalk is quite mobile in the ribosome, and is involved in E site tRNA release. In terms of biological role, protein L1 is also a translational repressor protein, it controls the translation of the L11 operon by binding to its mRNA. The polypeptide is Large ribosomal subunit protein uL1 (Prochlorococcus marinus (strain MIT 9301)).